The chain runs to 691 residues: Elongation factor G (691 aa).

Residues 8 to 282 form the tr-type G domain; it reads HMVRNIGIAA…AVVDYLPAPD (275 aa). Residues 17 to 24, 81 to 85, and 135 to 138 contribute to the GTP site; these read AHIDAGKT, DTPGH, and NKMD.

Belongs to the TRAFAC class translation factor GTPase superfamily. Classic translation factor GTPase family. EF-G/EF-2 subfamily.

The protein localises to the cytoplasm. Functionally, catalyzes the GTP-dependent ribosomal translocation step during translation elongation. During this step, the ribosome changes from the pre-translocational (PRE) to the post-translocational (POST) state as the newly formed A-site-bound peptidyl-tRNA and P-site-bound deacylated tRNA move to the P and E sites, respectively. Catalyzes the coordinated movement of the two tRNA molecules, the mRNA and conformational changes in the ribosome. This is Elongation factor G from Campylobacter hominis (strain ATCC BAA-381 / DSM 21671 / CCUG 45161 / LMG 19568 / NCTC 13146 / CH001A).